The sequence spans 110 residues: Phosphoribosyl-ATP pyrophosphatase (110 aa).

Belongs to the PRA-PH family.

The protein resides in the cytoplasm. The catalysed reaction is 1-(5-phospho-beta-D-ribosyl)-ATP + H2O = 1-(5-phospho-beta-D-ribosyl)-5'-AMP + diphosphate + H(+). Its pathway is amino-acid biosynthesis; L-histidine biosynthesis; L-histidine from 5-phospho-alpha-D-ribose 1-diphosphate: step 2/9. The polypeptide is Phosphoribosyl-ATP pyrophosphatase (Stutzerimonas stutzeri (strain A1501) (Pseudomonas stutzeri)).